Reading from the N-terminus, the 1392-residue chain is DNA-directed RNA polymerase subunit beta'' (1392 aa).

Residues cysteine 224, cysteine 295, cysteine 302, and cysteine 305 each coordinate Zn(2+).

It belongs to the RNA polymerase beta' chain family. RpoC2 subfamily. In terms of assembly, in plastids the minimal PEP RNA polymerase catalytic core is composed of four subunits: alpha, beta, beta', and beta''. When a (nuclear-encoded) sigma factor is associated with the core the holoenzyme is formed, which can initiate transcription. Zn(2+) serves as cofactor.

It localises to the plastid. Its subcellular location is the chloroplast. The enzyme catalyses RNA(n) + a ribonucleoside 5'-triphosphate = RNA(n+1) + diphosphate. Functionally, DNA-dependent RNA polymerase catalyzes the transcription of DNA into RNA using the four ribonucleoside triphosphates as substrates. The polypeptide is DNA-directed RNA polymerase subunit beta'' (Nicotiana tomentosiformis (Tobacco)).